The sequence spans 310 residues: Nitric oxide synthase-interacting protein homolog (310 aa).

A compositionally biased stretch (polar residues) spans 115–124; sequence FSAIESTPSR. The tract at residues 115–141 is disordered; sequence FSAIESTPSRTGAVATPRPEVGSLKRQ.

The protein belongs to the NOSIP family.

The protein resides in the cytoplasm. It is found in the nucleus. Functionally, negatively regulates nitric oxide production by inducing nitric oxide synthase translocation to actin cytoskeleton and inhibiting its enzymatic activity. The protein is Nitric oxide synthase-interacting protein homolog of Caenorhabditis elegans.